The following is a 535-amino-acid chain: Zinc transporter ZIP5 (535 aa).

An N-terminal signal peptide occupies residues 1 to 19 (MGPPVHHLLTGLCVGVALG). At 20–210 (WVGGSVPNLG…PAPPGDVLSA (191 aa)) the chain is on the extracellular side. N-linked (GlcNAc...) asparagine glycans are attached at residues N49 and N158. A helical transmembrane segment spans residues 211–231 (LLHSGLAVLFLSLPAPLSLLL). Over 232 to 242 (LRLLGPRLLRP) the chain is Cytoplasmic. A helical membrane pass occupies residues 243 to 263 (VLGFLGALAVGTLCGDALLHL). The Extracellular portion of the chain corresponds to 264-285 (LPHAQGGRHTGPSEQSEEDLGP). Residues 286–306 (GLSVLGGLFLLFMLENTLGLV) form a helical membrane-spanning segment. At 307 to 439 (RHRGLRPRCC…LLQEGLSFRK (133 aa)) the chain is on the cytoplasmic side. A disordered region spans residues 316-373 (CRNKRDLGEPNPDPEDGSGMVLRPLQAASEPEVQGQRENRQSSPSLAPPGHQGHSHEH). At S333 the chain carries Phosphoserine. Pros-methylhistidine is present on H371. Residues 440–460 (LLLLSLVSGALGLGGAALGVG) traverse the membrane as a helical segment. Topologically, residues 461-465 (LSLGP) are extracellular. The helical transmembrane segment at 466 to 486 (VPLTPWVFGTTAGVFLYVALV) threads the bilayer. Over 487–503 (DMLPTLLRPPEPLPVFH) the chain is Cytoplasmic. The helical transmembrane segment at 504 to 524 (VLLQGLGLLLGGSLMFTIALL) threads the bilayer. At 525 to 535 (EEQLVPTVPDG) the chain is on the extracellular side.

The protein belongs to the ZIP transporter (TC 2.A.5) family. Homodimer. In terms of processing, N-Glycosylated. Methylated at His-371 by METTL9. As to expression, expressed in all stages of eye development and primarily in the sclera and several layers of the retina, including the inner segment, outer plexiform layer and ganglion cell layer. Expressed in pancreas, kidney and the proximal and distal small intestine as well as in the embryonic visceral yolk sac. In the proximal intestine, expression is predominant in the crypts but diminishes toward the apical regions of the villi.

It localises to the basolateral cell membrane. The enzyme catalyses Zn(2+)(in) = Zn(2+)(out). Uniporter that transports zinc(2+) into polarized cells of enterocytes, pancreatic acinar and endoderm cells across the basolateral membrane and participates, notably, in zinc excretion from the intestine by the uptake of zinc from the blood into the intestine. The transport mechanism is temperature- and concentration-dependent and saturable. In addition, is also a high affinity copper transporter in vitro. Also may regulate glucose-stimulated insulin secretion (GSIS) in islets primarily through the zinc-activated SIRT1-PPARGC1A axis. Could regulate the BMP/TGF-beta (bone morphogenetic protein/transforming growth factor-beta) signaling pathway and modulates extracellular matrix (ECM) proteins of the sclera. Plays a role in eye development. This chain is Zinc transporter ZIP5, found in Mus musculus (Mouse).